The following is a 286-amino-acid chain: 3-hydroxybutyryl-CoA dehydrogenase (286 aa).

Belongs to the 3-hydroxyacyl-CoA dehydrogenase family.

It carries out the reaction 3-hydroxybutanoyl-CoA + NAD(+) = acetoacetyl-CoA + NADH + H(+). The enzyme catalyses (3S)-3-hydroxybutanoyl-CoA + NADP(+) = acetoacetyl-CoA + NADPH + H(+). It participates in lipid metabolism; butanoate metabolism. This Mycobacterium tuberculosis (strain CDC 1551 / Oshkosh) protein is 3-hydroxybutyryl-CoA dehydrogenase (fadB2).